Here is a 453-residue protein sequence, read N- to C-terminus: Exodeoxyribonuclease 7 large subunit (453 aa).

This sequence belongs to the XseA family. Heterooligomer composed of large and small subunits.

The protein resides in the cytoplasm. The catalysed reaction is Exonucleolytic cleavage in either 5'- to 3'- or 3'- to 5'-direction to yield nucleoside 5'-phosphates.. Its function is as follows. Bidirectionally degrades single-stranded DNA into large acid-insoluble oligonucleotides, which are then degraded further into small acid-soluble oligonucleotides. The protein is Exodeoxyribonuclease 7 large subunit of Rickettsia typhi (strain ATCC VR-144 / Wilmington).